Here is a 511-residue protein sequence, read N- to C-terminus: 2,3-bisphosphoglycerate-independent phosphoglycerate mutase (511 aa).

2 residues coordinate Mn(2+): Asp-12 and Ser-62. The Phosphoserine intermediate role is filled by Ser-62. Residues His-123, 153–154, Arg-185, Arg-191, 260–263, and Lys-335 each bind substrate; these read RD and RPDR. 5 residues coordinate Mn(2+): Asp-402, His-406, Asp-443, His-444, and His-462.

Belongs to the BPG-independent phosphoglycerate mutase family. As to quaternary structure, monomer. The cofactor is Mn(2+).

The enzyme catalyses (2R)-2-phosphoglycerate = (2R)-3-phosphoglycerate. It functions in the pathway carbohydrate degradation; glycolysis; pyruvate from D-glyceraldehyde 3-phosphate: step 3/5. Functionally, catalyzes the interconversion of 2-phosphoglycerate and 3-phosphoglycerate. This is 2,3-bisphosphoglycerate-independent phosphoglycerate mutase from Acetivibrio thermocellus (strain ATCC 27405 / DSM 1237 / JCM 9322 / NBRC 103400 / NCIMB 10682 / NRRL B-4536 / VPI 7372) (Clostridium thermocellum).